A 565-amino-acid chain; its full sequence is NAD-dependent malic enzyme (565 aa).

The Proton donor role is filled by tyrosine 104. Arginine 157 serves as a coordination point for NAD(+). The Proton acceptor role is filled by lysine 175. The a divalent metal cation site is built by glutamate 246, aspartate 247, and aspartate 270. The NAD(+) site is built by aspartate 270 and asparagine 418.

Belongs to the malic enzymes family. Homotetramer. It depends on Mg(2+) as a cofactor. The cofactor is Mn(2+).

The catalysed reaction is (S)-malate + NAD(+) = pyruvate + CO2 + NADH. It carries out the reaction oxaloacetate + H(+) = pyruvate + CO2. This Escherichia coli (strain SMS-3-5 / SECEC) protein is NAD-dependent malic enzyme.